A 938-amino-acid chain; its full sequence is Microperfuranone synthase (938 aa).

The segment at 44 to 445 (TSTRISYAEL…AGRTKDTIIV (402 aa)) is adenylation (A) domain. Positions 579 to 655 (SDSERAVQKA…AIARSIDSSR (77 aa)) constitute a Carrier domain. Residues 581 to 652 (SERAVQKALV…TPGAIARSID (72 aa)) are thiolation and peptide carrier (T) domain. S613 carries the O-(pantetheine 4'-phosphoryl)serine modification. The segment at 676–923 (PLFCIHPGSG…AKMLNREHIA (248 aa)) is thioesterase (TE) domain. The active site involves S746.

The protein belongs to the ATP-dependent AMP-binding enzyme family.

The protein operates within secondary metabolite biosynthesis. Its function is as follows. Microperfuranone synthase is the only protein required for the biosynthesis of the secondary metabolite microperfuranone from phenylpyruvic acid (PPA). Several steps for the microperfuranione biosynthesis have been proposed. These steps include the activation of PPA, by the micA adenylation (A) domain to AMP-phenylpyruvic acid followed by loading of the PPA unit to the thiolation and peptide carrier (T) domain and eventually transferring to the thioesterase (TE) domain. After loading another PPA unit onto the T domain, aldol condensation establishes the carbon-carbon bond between the alpha- and beta-carbon of the two PPA units. Sulfur-assisted furan ring formation, TE domain mediated hydrolysis, decarboxylation, and keto-enol tautomerization would generate microperfuranone attached to the T domain. Finally, microperfuranone is released by the TE domain. The polypeptide is Microperfuranone synthase (Emericella nidulans (strain FGSC A4 / ATCC 38163 / CBS 112.46 / NRRL 194 / M139) (Aspergillus nidulans)).